A 1030-amino-acid chain; its full sequence is Peroxisomal ATPase PEX6 (1030 aa).

The tract at residues 478-683 (VLLHSTTNNV…VETARMTATA (206 aa)) is AAA-cassette D1. Residues 767 to 956 (GILFYGPPGT…CSDAMLNAMS (190 aa)) form an AAA-cassette D2 region. ATP is bound at residue 772 to 779 (GPPGTGKT).

This sequence belongs to the AAA ATPase family. As to quaternary structure, interacts with PEX1; forming the PEX1-PEX6 AAA ATPase complex, which is composed of a heterohexamer formed by a trimer of PEX1-PEX6 dimers. Interacts with PEX15; anchors PEX1-PEX6 heterooligomers to the peroxisomal membrane and mediates their association with the peroxisomal importomer. Interacts with UBP15.

It localises to the cytoplasm. The protein localises to the cytosol. It is found in the peroxisome membrane. The enzyme catalyses ATP + H2O = ADP + phosphate + H(+). Its function is as follows. Component of the PEX1-PEX6 AAA ATPase complex, a protein dislocase complex that mediates the ATP-dependent extraction of the PEX5 receptor from peroxisomal membranes, an essential step for PEX5 recycling. Specifically recognizes PEX5 monoubiquitinated at 'Cys-6', and pulls it out of the peroxisome lumen through the PEX2-PEX10-PEX12 retrotranslocation channel. Extraction by the PEX1-PEX6 AAA ATPase complex is accompanied by unfolding of the TPR repeats and release of bound cargo from PEX5. The sequence is that of Peroxisomal ATPase PEX6 from Saccharomyces cerevisiae (strain ATCC 204508 / S288c) (Baker's yeast).